Here is a 202-residue protein sequence, read N- to C-terminus: Transcriptional regulator GfcR 2 (202 aa).

It belongs to the purine/pyrimidine phosphoribosyltransferase family. GfcR subfamily.

In Methanosarcina barkeri (strain Fusaro / DSM 804), this protein is Transcriptional regulator GfcR 2.